The sequence spans 380 residues: Hydrogenase maturation factor HypD2 (380 aa).

Fe cation is bound by residues cysteine 36, cysteine 64, and cysteine 67.

Belongs to the HypD family. [4Fe-4S] cluster serves as cofactor.

It functions in the pathway protein modification; [NiFe] hydrogenase maturation. Its function is as follows. Involved in the maturation of [NiFe] hydrogenases. Involved in the biosynthesis of the Fe(CN)(2)CO cofactor. The sequence is that of Hydrogenase maturation factor HypD2 (hypD2) from Bradyrhizobium diazoefficiens (strain JCM 10833 / BCRC 13528 / IAM 13628 / NBRC 14792 / USDA 110).